Consider the following 267-residue polypeptide: Malonyl-[acyl-carrier protein] O-methyltransferase (267 aa).

This sequence belongs to the methyltransferase superfamily.

The catalysed reaction is malonyl-[ACP] + S-adenosyl-L-methionine = malonyl-[ACP] methyl ester + S-adenosyl-L-homocysteine. It functions in the pathway cofactor biosynthesis; biotin biosynthesis. In terms of biological role, converts the free carboxyl group of a malonyl-thioester to its methyl ester by transfer of a methyl group from S-adenosyl-L-methionine (SAM). It allows to synthesize pimeloyl-ACP via the fatty acid synthetic pathway. The sequence is that of Malonyl-[acyl-carrier protein] O-methyltransferase from Yersinia pestis.